Reading from the N-terminus, the 312-residue chain is Ornithine carbamoyltransferase (312 aa).

Residues 57–60, Gln84, Arg108, and 135–138 contribute to the carbamoyl phosphate site; these read STRT and HPCQ. Residues Asn166, Asp226, and 230 to 231 each bind L-ornithine; that span reads SM. Carbamoyl phosphate-binding positions include 265-266 and Arg293; that span reads CL.

This sequence belongs to the aspartate/ornithine carbamoyltransferase superfamily. OTCase family.

The protein localises to the cytoplasm. The catalysed reaction is carbamoyl phosphate + L-ornithine = L-citrulline + phosphate + H(+). Its pathway is amino-acid biosynthesis; L-arginine biosynthesis; L-arginine from L-ornithine and carbamoyl phosphate: step 1/3. Its function is as follows. Reversibly catalyzes the transfer of the carbamoyl group from carbamoyl phosphate (CP) to the N(epsilon) atom of ornithine (ORN) to produce L-citrulline. This chain is Ornithine carbamoyltransferase, found in Brucella suis biovar 1 (strain 1330).